Reading from the N-terminus, the 129-residue chain is Small ribosomal subunit protein eS6 (129 aa).

This sequence belongs to the eukaryotic ribosomal protein eS6 family.

The polypeptide is Small ribosomal subunit protein eS6 (Archaeoglobus fulgidus (strain ATCC 49558 / DSM 4304 / JCM 9628 / NBRC 100126 / VC-16)).